Here is a 380-residue protein sequence, read N- to C-terminus: MVELLHSIKAHNDKAWSVSVHPTLPIIATASTDKSTKLYKLSTKQKFPLVAELEDTHKRSIRSVAFKPPLGGVDAPKLDFLDLPALAAGSFDSTISVWGIDEPDVEYDIDEVVANQKEILTSPNNEWNLMAIIEGHENEVKAVDWNFQGQYLASCSRDKTVWIWETDPETLEEFECVAVLNDHSQDVKNVSWHPSMNILASSSYDDTIRIYQQDIAGDEWSCVGILNGHEGTVWCSKFESFKSPTADSSILRLVSASDDLSVRIWVAKREEEEDKPELPSSIKHTKEMVWEVESVLPAVHKYPVYSVAWSSLTGKIASAGSDGKIVVYSEAEKGKWVIDSVHEGSHGVHEINCVIWAQLDDENEILVSAGDDGYVNLWNV.

WD repeat units follow at residues 10 to 49, 56 to 108, 135 to 175, 182 to 221, 228 to 275, 299 to 338, and 346 to 380; these read AHND…KFPL, THKR…VEYD, GHEN…EEFE, DHSQ…DEWS, GHEG…EEDK, VHKY…KWVI, and HGVH…LWNV.

Belongs to the WD repeat CIA1 family. In terms of assembly, interacts with NAR1.

It is found in the cytoplasm. It localises to the nucleus. Its function is as follows. Essential component of the cytosolic iron-sulfur (Fe/S) protein assembly machinery. Required for the maturation of extramitochondrial Fe/S proteins. The protein is Probable cytosolic iron-sulfur protein assembly protein 1 of Candida dubliniensis (strain CD36 / ATCC MYA-646 / CBS 7987 / NCPF 3949 / NRRL Y-17841) (Yeast).